The chain runs to 100 residues: Urease subunit gamma (100 aa).

This sequence belongs to the urease gamma subunit family. As to quaternary structure, heterotrimer of UreA (gamma), UreB (beta) and UreC (alpha) subunits. Three heterotrimers associate to form the active enzyme.

It is found in the cytoplasm. The enzyme catalyses urea + 2 H2O + H(+) = hydrogencarbonate + 2 NH4(+). Its pathway is nitrogen metabolism; urea degradation; CO(2) and NH(3) from urea (urease route): step 1/1. In Haemophilus influenzae (strain ATCC 51907 / DSM 11121 / KW20 / Rd), this protein is Urease subunit gamma.